We begin with the raw amino-acid sequence, 362 residues long: UDP-N-acetylglucosamine--N-acetylmuramyl-(pentapeptide) pyrophosphoryl-undecaprenol N-acetylglucosamine transferase (362 aa).

UDP-N-acetyl-alpha-D-glucosamine contacts are provided by residues 15 to 17, Asn-127, Arg-165, Ser-191, Ile-247, 266 to 271, and Gln-292; these read TGG and ALTVSE.

Belongs to the glycosyltransferase 28 family. MurG subfamily.

The protein localises to the cell inner membrane. The enzyme catalyses di-trans,octa-cis-undecaprenyl diphospho-N-acetyl-alpha-D-muramoyl-L-alanyl-D-glutamyl-meso-2,6-diaminopimeloyl-D-alanyl-D-alanine + UDP-N-acetyl-alpha-D-glucosamine = di-trans,octa-cis-undecaprenyl diphospho-[N-acetyl-alpha-D-glucosaminyl-(1-&gt;4)]-N-acetyl-alpha-D-muramoyl-L-alanyl-D-glutamyl-meso-2,6-diaminopimeloyl-D-alanyl-D-alanine + UDP + H(+). The protein operates within cell wall biogenesis; peptidoglycan biosynthesis. Functionally, cell wall formation. Catalyzes the transfer of a GlcNAc subunit on undecaprenyl-pyrophosphoryl-MurNAc-pentapeptide (lipid intermediate I) to form undecaprenyl-pyrophosphoryl-MurNAc-(pentapeptide)GlcNAc (lipid intermediate II). The protein is UDP-N-acetylglucosamine--N-acetylmuramyl-(pentapeptide) pyrophosphoryl-undecaprenol N-acetylglucosamine transferase of Shewanella sp. (strain ANA-3).